The chain runs to 204 residues: Large ribosomal subunit protein uL22m (204 aa).

A mitochondrion-targeting transit peptide spans 1 to 27; sequence MAASITASVWGTLLKIHRGLTASGCLP.

Belongs to the universal ribosomal protein uL22 family. As to quaternary structure, component of the mitochondrial ribosome large subunit (39S) which comprises a 16S rRNA and about 50 distinct proteins.

The protein resides in the mitochondrion. This chain is Large ribosomal subunit protein uL22m (mrpl22), found in Xenopus tropicalis (Western clawed frog).